A 380-amino-acid polypeptide reads, in one-letter code: Set1 complex component swd3 (380 aa).

7 WD repeats span residues 52 to 91, 94 to 133, 136 to 177, 179 to 219, 221 to 262, 291 to 330, and 335 to 374; these read GHEK…LECT, GHYR…SVRC, GHTN…RMLP, HSEP…KTLV, PINV…RIFD, NDSS…IIDD, and SDDP…SKHE. The residue at position 379 (S379) is a Phosphoserine.

Component of the Set1 complex composed of ash2, sdc1, set1, shg1, spp1, swd1, swd2 and swd3.

The protein localises to the nucleus. The Set1 complex specifically methylates 'Lys-4' of histone H3. The polypeptide is Set1 complex component swd3 (Schizosaccharomyces pombe (strain 972 / ATCC 24843) (Fission yeast)).